The chain runs to 319 residues: Ribonucleoside-diphosphate reductase small chain (319 aa).

Residues Asp-70, Glu-101, and His-104 each coordinate Fe cation. Tyr-108 is a catalytic residue. 3 residues coordinate Fe cation: Glu-163, Glu-197, and His-200. Residues 313 to 319 (FSLDVDF) form an interaction with R1 region.

It belongs to the ribonucleoside diphosphate reductase small chain family. In terms of assembly, interacts with RNR1/OPG080 subunit. Can interact with host RNR1 supunit. Requires Fe cation as cofactor.

The catalysed reaction is a 2'-deoxyribonucleoside 5'-diphosphate + [thioredoxin]-disulfide + H2O = a ribonucleoside 5'-diphosphate + [thioredoxin]-dithiol. Ribonucleoside-diphosphate reductase holoenzyme provides the precursors necessary for viral DNA synthesis. Allows virus growth in non-dividing cells. Catalyzes the biosynthesis of deoxyribonucleotides from the corresponding ribonucleotides. The sequence is that of Ribonucleoside-diphosphate reductase small chain (OPG048) from Vaccinia virus (strain L-IVP) (VACV).